The primary structure comprises 153 residues: D-aminoacyl-tRNA deacylase (153 aa).

The Gly-cisPro motif, important for rejection of L-amino acids signature appears at 142-143; the sequence is GP.

Belongs to the DTD family. Homodimer.

The protein localises to the cytoplasm. It carries out the reaction glycyl-tRNA(Ala) + H2O = tRNA(Ala) + glycine + H(+). The enzyme catalyses a D-aminoacyl-tRNA + H2O = a tRNA + a D-alpha-amino acid + H(+). Its function is as follows. An aminoacyl-tRNA editing enzyme that deacylates mischarged D-aminoacyl-tRNAs. Also deacylates mischarged glycyl-tRNA(Ala), protecting cells against glycine mischarging by AlaRS. Acts via tRNA-based rather than protein-based catalysis; rejects L-amino acids rather than detecting D-amino acids in the active site. By recycling D-aminoacyl-tRNA to D-amino acids and free tRNA molecules, this enzyme counteracts the toxicity associated with the formation of D-aminoacyl-tRNA entities in vivo and helps enforce protein L-homochirality. The sequence is that of D-aminoacyl-tRNA deacylase from Acidovorax ebreus (strain TPSY) (Diaphorobacter sp. (strain TPSY)).